The primary structure comprises 441 residues: Chitinase-like protein Idgf3 (441 aa).

The N-terminal stretch at 1–23 is a signal peptide; the sequence is MSGSLWLSLALSLAVLAQFKVSA. Residues 25–441 form the GH18 domain; it reads PNLVCFYDSQ…MLRAIKYRLL (417 aa). Cysteines 29 and 56 form a disulfide. N221 carries an N-linked (GlcNAc...) asparagine glycan. Residues 310–331 form a disordered region; sequence GDSGMPVVSSTQGPAPAGPQSK. Cysteines 342 and 425 form a disulfide.

It belongs to the glycosyl hydrolase 18 family. IDGF subfamily. In terms of processing, glycosylated.

The protein localises to the secreted. Functionally, cooperates with insulin-like peptides to stimulate the proliferation, polarization and motility of imaginal disk cells. May act by stabilizing the binding of insulin-like peptides to its receptor through a simultaneous interaction with both molecules to form a multiprotein signaling complex. The sequence is that of Chitinase-like protein Idgf3 (Idgf3) from Drosophila simulans (Fruit fly).